A 56-amino-acid chain; its full sequence is Large ribosomal subunit protein bL33 (56 aa).

The protein belongs to the bacterial ribosomal protein bL33 family.

This chain is Large ribosomal subunit protein bL33, found in Delftia acidovorans (strain DSM 14801 / SPH-1).